A 159-amino-acid polypeptide reads, in one-letter code: NADH-quinone oxidoreductase subunit B 2 (159 aa).

4 residues coordinate [4Fe-4S] cluster: Cys37, Cys38, Cys102, and Cys132.

This sequence belongs to the complex I 20 kDa subunit family. NDH-1 is composed of 14 different subunits. Subunits NuoB, C, D, E, F, and G constitute the peripheral sector of the complex. [4Fe-4S] cluster serves as cofactor.

The protein resides in the cell inner membrane. The catalysed reaction is a quinone + NADH + 5 H(+)(in) = a quinol + NAD(+) + 4 H(+)(out). Functionally, NDH-1 shuttles electrons from NADH, via FMN and iron-sulfur (Fe-S) centers, to quinones in the respiratory chain. Couples the redox reaction to proton translocation (for every two electrons transferred, four hydrogen ions are translocated across the cytoplasmic membrane), and thus conserves the redox energy in a proton gradient. The sequence is that of NADH-quinone oxidoreductase subunit B 2 from Azoarcus sp. (strain BH72).